The chain runs to 443 residues: Threonine/serine transporter TdcC (443 aa).

The next 11 membrane-spanning stretches (helical) occupy residues 22-42 (TTWT…FFPI), 44-64 (AGFG…PIAF), 97-117 (GVVI…IYGV), 140-160 (FVAL…KDLM), 163-183 (VMSF…LSLI), 207-227 (ILVT…FSPI), 259-279 (ASLL…FTLS), 319-339 (ASII…LGTL), 366-386 (ISMI…PNIL), 389-409 (IEAM…MFAI), and 423-443 (ENLF…YKLF).

This sequence belongs to the amino acid/polyamine transporter 2 family. SdaC/TdcC subfamily.

It localises to the cell inner membrane. The enzyme catalyses L-threonine(in) + H(+)(in) = L-threonine(out) + H(+)(out). It catalyses the reaction L-serine(in) + H(+)(in) = L-serine(out) + H(+)(out). In terms of biological role, involved in the import of threonine and serine into the cell, with the concomitant import of a proton (symport system). This is Threonine/serine transporter TdcC from Enterobacter sp. (strain 638).